Reading from the N-terminus, the 248-residue chain is Cyclo(L-leucyl-L-leucyl) synthase (248 aa).

The active-site Nucleophile is the serine 37. Substrate-binding positions include asparagine 40, 180 to 184 (YVIAE), tyrosine 204, and 209 to 210 (KL).

It belongs to the CDPS family. Monomer.

The catalysed reaction is 2 L-leucyl-tRNA(Leu) = cyclo(L-leucyl-L-leucyl) + 2 tRNA(Leu) + 2 H(+). Its function is as follows. Involved in the biosynthesis of pulcherrimin, a red extracellular pigment. It uses activated amino acids in the form of aminoacyl-tRNAs (aa-tRNAs) as substrates to catalyze the ATP-independent formation of cyclodipeptides which are intermediates in diketopiperazine (DKP) biosynthetic pathways. Catalyzes the formation of cyclo(L-Leu-L-Leu) (cLL) from L-leucyl-tRNA(Leu). Can also incorporate various nonpolar residues, such as L-phenylalanine, L-leucine and methionine, into cyclodipeptides. This chain is Cyclo(L-leucyl-L-leucyl) synthase (yvmC), found in Bacillus subtilis (strain 168).